A 728-amino-acid chain; its full sequence is Beta-porphyranase A (728 aa).

The first 22 residues, 1-22, serve as a signal peptide directing secretion; the sequence is MSYKYIFLLSAFTLGVPPGIYC. Substrate-binding residues include His-53, Lys-76, Trp-78, Lys-87, His-114, and Asn-151. The Proton donor role is filled by Glu-152. 4 residues coordinate substrate: His-235, Glu-279, Ser-326, and Trp-331. Glu-279 serves as the catalytic Nucleophile. The region spanning 599 to 701 is the CBM-cenC domain; that stretch reads TLQNGTFSEG…AVSFDFNSTV (103 aa).

It belongs to the glycosyl hydrolase 86 family.

It catalyses the reaction Hydrolysis of beta-D-galactopyranose-(1-&gt;4)-alpha-L-galactopyranose-6-sulfate linkages in porphyran.. Cleaves the sulfated polysaccharide porphyran at the (1-&gt;4) linkages between beta-D-galactopyranose and alpha-L-galactopyranose-6-sulfate, forming mostly the disaccharide alpha-L-galactopyranose-6-sulfate-(1-&gt;3)-beta-D-galactose. Some longer oligosaccharides of even number of residues are also observed. Inactive on the non-sulfated agarose portion of the porphyran backbone. Can also use methylated galactoses. This chain is Beta-porphyranase A, found in Phocaeicola plebeius (strain DSM 17135 / JCM 12973 / CCUG 54634 / M2) (Bacteroides plebeius).